The primary structure comprises 481 residues: Anti-sigma-I factor RsgI5 (481 aa).

Residues 1-50 (MKHKGIVLKLTKSKAIISTNDFQCYYIKRSPTIYVGKEVEFTNKDIVTKK) are Cytoplasmic-facing. A RsgI N-terminal anti-sigma domain is found at 3–50 (HKGIVLKLTKSKAIISTNDFQCYYIKRSPTIYVGKEVEFTNKDIVTKK). Residues 51–71 (SVLIKPALSVACFILLIACVL) form a helical membrane-spanning segment. Over 72-481 (SLSKIINNIS…DATFIGIKVD (410 aa)) the chain is Extracellular. The segment at 255-339 (ASEERNPEES…TPTPTPTPAD (85 aa)) is disordered. Basic and acidic residues predominate over residues 256–265 (SEERNPEESP). 2 stretches are compositionally biased toward low complexity: residues 266-283 (KMTPTPTPTHTATHTPTD) and 291-315 (NTPTSTPAAKPSPKTASNSASTSTP). The span at 316–336 (APKPTSTPTPTLMPTPTPTPT) shows a compositional bias: pro residues.

As to quaternary structure, interacts (via RsgI N-terminal anti-sigma domain) with SigI5.

The protein resides in the cell membrane. In terms of biological role, anti-sigma factor for SigI5. Negatively regulates SigI5 activity through direct interaction. Binding of the polysaccharide substrate to the extracellular C-terminal sensing domain of RsgI5 may induce a conformational change in its N-terminal cytoplasmic region, leading to the release and activation of SigI5. This is Anti-sigma-I factor RsgI5 from Acetivibrio thermocellus (strain ATCC 27405 / DSM 1237 / JCM 9322 / NBRC 103400 / NCIMB 10682 / NRRL B-4536 / VPI 7372) (Clostridium thermocellum).